The primary structure comprises 266 residues: 5'-nucleotidase SurE (266 aa).

A divalent metal cation is bound by residues Asp10, Asp11, Ser41, and Asn97.

Belongs to the SurE nucleotidase family. Requires a divalent metal cation as cofactor.

It localises to the cytoplasm. It carries out the reaction a ribonucleoside 5'-phosphate + H2O = a ribonucleoside + phosphate. Its function is as follows. Nucleotidase that shows phosphatase activity on nucleoside 5'-monophosphates. This chain is 5'-nucleotidase SurE, found in Methanocella arvoryzae (strain DSM 22066 / NBRC 105507 / MRE50).